The following is a 329-amino-acid chain: DNA-directed RNA polymerase subunit alpha (329 aa).

Residues 1-235 form an alpha N-terminal domain (alpha-NTD) region; that stretch reads MQGSVTEFLK…EQLDAFVDLR (235 aa). The tract at residues 249–329 is alpha C-terminal domain (alpha-CTD); the sequence is FDPILLRPVD…NWPPASIAED (81 aa).

The protein belongs to the RNA polymerase alpha chain family. Homodimer. The RNAP catalytic core consists of 2 alpha, 1 beta, 1 beta' and 1 omega subunit. When a sigma factor is associated with the core the holoenzyme is formed, which can initiate transcription.

It catalyses the reaction RNA(n) + a ribonucleoside 5'-triphosphate = RNA(n+1) + diphosphate. Functionally, DNA-dependent RNA polymerase catalyzes the transcription of DNA into RNA using the four ribonucleoside triphosphates as substrates. This is DNA-directed RNA polymerase subunit alpha from Actinobacillus pleuropneumoniae serotype 5b (strain L20).